Reading from the N-terminus, the 309-residue chain is tRNA uridine(34) hydroxylase (309 aa).

In terms of domain architecture, Rhodanese spans 130 to 224; that stretch reads SDPDTIVIDT…YLEEVPQEES (95 aa). Residue Cys-184 is the Cysteine persulfide intermediate of the active site.

This sequence belongs to the TrhO family.

The catalysed reaction is uridine(34) in tRNA + AH2 + O2 = 5-hydroxyuridine(34) in tRNA + A + H2O. Its function is as follows. Catalyzes oxygen-dependent 5-hydroxyuridine (ho5U) modification at position 34 in tRNAs. This Rhizobium johnstonii (strain DSM 114642 / LMG 32736 / 3841) (Rhizobium leguminosarum bv. viciae) protein is tRNA uridine(34) hydroxylase.